Consider the following 347-residue polypeptide: UDP-3-O-acylglucosamine N-acyltransferase (347 aa).

Residue His241 is the Proton acceptor of the active site.

Belongs to the transferase hexapeptide repeat family. LpxD subfamily. As to quaternary structure, homotrimer.

The catalysed reaction is a UDP-3-O-[(3R)-3-hydroxyacyl]-alpha-D-glucosamine + a (3R)-hydroxyacyl-[ACP] = a UDP-2-N,3-O-bis[(3R)-3-hydroxyacyl]-alpha-D-glucosamine + holo-[ACP] + H(+). It functions in the pathway bacterial outer membrane biogenesis; LPS lipid A biosynthesis. Functionally, catalyzes the N-acylation of UDP-3-O-acylglucosamine using 3-hydroxyacyl-ACP as the acyl donor. Is involved in the biosynthesis of lipid A, a phosphorylated glycolipid that anchors the lipopolysaccharide to the outer membrane of the cell. The polypeptide is UDP-3-O-acylglucosamine N-acyltransferase (Neisseria meningitidis serogroup A / serotype 4A (strain DSM 15465 / Z2491)).